Reading from the N-terminus, the 183-residue chain is Ribonuclease H (183 aa).

The 150-residue stretch at 2–151 folds into the RNase H type-1 domain; the sequence is SQARFIAFSD…VDQLAQAAAR (150 aa). The Mg(2+) site is built by Asp-11, Glu-57, Asp-79, and Asp-143.

Belongs to the RNase H family. In terms of assembly, monomer. It depends on Mg(2+) as a cofactor.

The protein localises to the cytoplasm. It catalyses the reaction Endonucleolytic cleavage to 5'-phosphomonoester.. In terms of biological role, endonuclease that specifically degrades the RNA of RNA-DNA hybrids. This is Ribonuclease H from Anaeromyxobacter sp. (strain K).